The following is a 92-amino-acid chain: Alpha-hemoglobin-stabilizing protein (92 aa).

This sequence belongs to the AHSP family. As to quaternary structure, monomer. Forms a heterodimer with free alpha-hemoglobin. Does not bind beta-hemoglobin nor alpha(2)beta(2) hemoglobin A.

The protein resides in the cytoplasm. In terms of biological role, acts as a chaperone to prevent the harmful aggregation of alpha-hemoglobin during normal erythroid cell development. Specifically protects free alpha-hemoglobin from precipitation. In Bos taurus (Bovine), this protein is Alpha-hemoglobin-stabilizing protein (AHSP).